The primary structure comprises 97 residues: Unclassified hydrophobin F (97 aa).

An N-terminal signal peptide occupies residues 1–17 (MRVSALAFAAVLSLVSA). Disulfide bonds link Cys24–Cys75, Cys39–Cys67, Cys40–Cys58, and Cys76–Cys85.

The protein localises to the secreted. Its subcellular location is the cell wall. Functionally, aerial growth, conidiation, and dispersal of filamentous fungi in the environment rely upon a capability of their secreting small amphipathic proteins called hydrophobins (HPBs) with low sequence identity. Class I can self-assemble into an outermost layer of rodlet bundles on aerial cell surfaces, conferring cellular hydrophobicity that supports fungal growth, development and dispersal; whereas Class II form highly ordered films at water-air interfaces through intermolecular interactions but contribute nothing to the rodlet structure. In P.expansum, hydrophobins contribute to germination, tolerance to cold stress and mycotoxins patulin and citrinin production. HfbC, HfbD, HfbE, and HfbF have functional redundancy in fungal surface hydrophobicity. This is Unclassified hydrophobin F from Penicillium expansum (Blue mold rot fungus).